Reading from the N-terminus, the 550-residue chain is Chaperonin GroEL (550 aa).

ATP is bound by residues 30 to 33 (TLGP), Lys51, 87 to 91 (DGTTT), Gly416, 480 to 482 (NVA), and Asp496. Residues 525–550 (LPKKDDEGGGGDMGGMGGMGGMGGMM) are disordered. A compositionally biased stretch (gly residues) spans 534-550 (GGDMGGMGGMGGMGGMM).

The protein belongs to the chaperonin (HSP60) family. As to quaternary structure, forms a cylinder of 14 subunits composed of two heptameric rings stacked back-to-back. Interacts with the co-chaperonin GroES.

The protein resides in the cytoplasm. The enzyme catalyses ATP + H2O + a folded polypeptide = ADP + phosphate + an unfolded polypeptide.. In terms of biological role, together with its co-chaperonin GroES, plays an essential role in assisting protein folding. The GroEL-GroES system forms a nano-cage that allows encapsulation of the non-native substrate proteins and provides a physical environment optimized to promote and accelerate protein folding. This is Chaperonin GroEL from Halorhodospira halophila (strain DSM 244 / SL1) (Ectothiorhodospira halophila (strain DSM 244 / SL1)).